A 1043-amino-acid chain; its full sequence is Peroxisomal ATPase PEX1 (1043 aa).

The tract at residues 453 to 626 (ATPAIILDGK…SKNQIMKLNR (174 aa)) is AAA-cassette D1. ATP is bound by residues 461 to 468 (GKQGIGKT) and 738 to 745 (GYPGCGKT). The tract at residues 733 to 926 (GILLYGYPGC…CYNAYLKSVH (194 aa)) is AAA-cassette D2.

This sequence belongs to the AAA ATPase family. Interacts with PEX6; forming the PEX1-PEX6 AAA ATPase complex, which is composed of a heterohexamer formed by a trimer of PEX1-PEX6 dimers. The PEX1-PEX6 heterooligomers associate with the peroxisomal importomer via interaction of PEX6 with the peroxisomal membrane anchor PEX15.

The protein localises to the cytoplasm. The protein resides in the cytosol. Its subcellular location is the peroxisome membrane. It catalyses the reaction ATP + H2O = ADP + phosphate + H(+). Functionally, component of the PEX1-PEX6 AAA ATPase complex, a protein dislocase complex that mediates the ATP-dependent extraction of the PEX5 receptor from peroxisomal membranes, an essential step for PEX5 recycling. Specifically recognizes PEX5 monoubiquitinated at 'Cys-6', and pulls it out of the peroxisome lumen through the PEX2-PEX10-PEX12 retrotranslocation channel. Extraction by the PEX1-PEX6 AAA ATPase complex is accompanied by unfolding of the TPR repeats and release of bound cargo from PEX5. In Saccharomyces cerevisiae (strain ATCC 204508 / S288c) (Baker's yeast), this protein is Peroxisomal ATPase PEX1.